We begin with the raw amino-acid sequence, 166 residues long: Ribosome maturation factor RimP (166 aa).

This sequence belongs to the RimP family.

It is found in the cytoplasm. In terms of biological role, required for maturation of 30S ribosomal subunits. In Rickettsia akari (strain Hartford), this protein is Ribosome maturation factor RimP.